The following is an 83-amino-acid chain: Small ribosomal subunit protein bS20 (83 aa).

This sequence belongs to the bacterial ribosomal protein bS20 family.

Binds directly to 16S ribosomal RNA. This is Small ribosomal subunit protein bS20 from Staphylococcus aureus (strain JH1).